Consider the following 412-residue polypeptide: Allantoate amidohydrolase (412 aa).

Positions 84, 95, 130, and 193 each coordinate Zn(2+). 3 residues coordinate allantoate: R218, N278, and R291. H385 provides a ligand contact to Zn(2+).

The protein belongs to the peptidase M20 family. In terms of assembly, homodimer. Requires Zn(2+) as cofactor.

It is found in the cytoplasm. The enzyme catalyses allantoate + H2O + 2 H(+) = (S)-2-ureidoglycine + NH4(+) + CO2. The protein operates within nitrogen metabolism; (S)-allantoin degradation. Involved in the anaerobic nitrogen utilization via the assimilation of allantoin. Catalyzes specifically the hydrolysis of allantoate to yield CO2, NH3 and S-ureidoglycine, which is unstable and readily undergoes a second deamination by S-ureidoglycine aminohydrolase AllE to yield S-ureidoglycolate and NH3. This chain is Allantoate amidohydrolase, found in Bacillus subtilis (strain 168).